The primary structure comprises 265 residues: Undecaprenyl-diphosphatase (265 aa).

The next 7 membrane-spanning stretches (helical) occupy residues 38 to 58, 75 to 95, 108 to 128, 135 to 155, 181 to 201, 215 to 235, and 244 to 264; these read RSDF…CLAL, RDYV…GLIV, PVAW…HFAG, VVTW…GVFP, FVFM…LLEM, VAVA…WLLG, and VFAV…PAAA.

It belongs to the UppP family.

The protein localises to the cell inner membrane. It carries out the reaction di-trans,octa-cis-undecaprenyl diphosphate + H2O = di-trans,octa-cis-undecaprenyl phosphate + phosphate + H(+). Catalyzes the dephosphorylation of undecaprenyl diphosphate (UPP). Confers resistance to bacitracin. The protein is Undecaprenyl-diphosphatase of Xanthomonas axonopodis pv. citri (strain 306).